The sequence spans 368 residues: Phosphate acyltransferase (368 aa).

The tract at residues Val-335–Ala-368 is disordered. A compositionally biased stretch (low complexity) spans Pro-349–Ala-368.

The protein belongs to the PlsX family. In terms of assembly, homodimer. Probably interacts with PlsY.

Its subcellular location is the cytoplasm. It catalyses the reaction a fatty acyl-[ACP] + phosphate = an acyl phosphate + holo-[ACP]. It functions in the pathway lipid metabolism; phospholipid metabolism. Its function is as follows. Catalyzes the reversible formation of acyl-phosphate (acyl-PO(4)) from acyl-[acyl-carrier-protein] (acyl-ACP). This enzyme utilizes acyl-ACP as fatty acyl donor, but not acyl-CoA. The protein is Phosphate acyltransferase of Burkholderia multivorans (strain ATCC 17616 / 249).